The primary structure comprises 99 residues: MEVVDPKIDPWNHPGSQPETPCNNCYCKKCCFHCPLCFMKKGLGISYGRKKRRQRRRTPQGSKIHQDPVPKQPLSQTRGDPTGPEESKKKVESQTETDP.

Residues 1 to 24 (MEVVDPKIDPWNHPGSQPETPCNN) form an interaction with human CREBBP region. The transactivation stretch occupies residues 1 to 48 (MEVVDPKIDPWNHPGSQPETPCNNCYCKKCCFHCPLCFMKKGLGISYG). The Zn(2+) site is built by Cys-22, Cys-25, and Cys-27. The cysteine-rich stretch occupies residues 22-37 (CNNCYCKKCCFHCPLC). Lys-28 is modified (N6-acetyllysine; by host PCAF). 4 residues coordinate Zn(2+): Cys-30, His-33, Cys-34, and Cys-37. A core region spans residues 38 to 48 (FMKKGLGISYG). The disordered stretch occupies residues 47–99 (YGRKKRRQRRRTPQGSKIHQDPVPKQPLSQTRGDPTGPEESKKKVESQTETDP). The segment covering 48 to 58 (GRKKRRQRRRT) has biased composition (basic residues). The Nuclear localization signal, RNA-binding (TAR), and protein transduction motif lies at 49–57 (RKKRRQRRR). Residues 49 to 86 (RKKRRQRRRTPQGSKIHQDPVPKQPLSQTRGDPTGPEE) form an interaction with the host capping enzyme RNGTT region. Lys-50 and Lys-51 each carry N6-acetyllysine; by host EP300 and GCN5L2. Asymmetric dimethylarginine; by host PRMT6 occurs at positions 52 and 53. Residue Lys-71 forms a Glycyl lysine isopeptide (Lys-Gly) (interchain with G-Cter in ubiquitin) linkage. A Cell attachment site motif is present at residues 78-80 (RGD).

This sequence belongs to the lentiviruses Tat family. In terms of assembly, interacts with host CCNT1. Associates with the P-TEFb complex composed at least of Tat, P-TEFb (CDK9 and CCNT1), TAR RNA, RNA Pol II. Recruits the HATs CREBBP, TAF1/TFIID, EP300, PCAF and GCN5L2. Interacts with host KAT5/Tip60; this interaction targets the latter to degradation. Interacts with the host deacetylase SIRT1. Interacts with host capping enzyme RNGTT; this interaction stimulates RNGTT. Binds to host KDR, and to the host integrins ITGAV/ITGB3 and ITGA5/ITGB1. Interacts with host KPNB1/importin beta-1 without previous binding to KPNA1/importin alpha-1. Interacts with EIF2AK2. Interacts with host nucleosome assembly protein NAP1L1; this interaction may be required for the transport of Tat within the nucleus, since the two proteins interact at the nuclear rim. Interacts with host C1QBP/SF2P32; this interaction involves lysine-acetylated Tat. Interacts with the host chemokine receptors CCR2, CCR3 and CXCR4. Interacts with host DPP4/CD26; this interaction may trigger an anti-proliferative effect. Interacts with host LDLR. Interacts with the host extracellular matrix metalloproteinase MMP1. Interacts with host PRMT6; this interaction mediates Tat's methylation. Interacts with, and is ubiquitinated by MDM2/Hdm2. Interacts with host PSMC3 and HTATIP2. Interacts with STAB1; this interaction may overcome SATB1-mediated repression of IL2 and IL2RA (interleukin) in T cells by binding to the same domain than HDAC1. Interacts (when acetylated) with human CDK13, thereby increasing HIV-1 mRNA splicing and promoting the production of the doubly spliced HIV-1 protein Nef. Interacts with host TBP; this interaction modulates the activity of transcriptional pre-initiation complex. Interacts with host RELA. Interacts with host PLSCR1; this interaction negatively regulates Tat transactivation activity by altering its subcellular distribution. In terms of processing, asymmetrical arginine methylation by host PRMT6 seems to diminish the transactivation capacity of Tat and affects the interaction with host CCNT1. Post-translationally, acetylation by EP300, CREBBP, GCN5L2/GCN5 and PCAF regulates the transactivation activity of Tat. EP300-mediated acetylation of Lys-50 promotes dissociation of Tat from the TAR RNA through the competitive binding to PCAF's bromodomain. In addition, the non-acetylated Tat's N-terminus can also interact with PCAF. PCAF-mediated acetylation of Lys-28 enhances Tat's binding to CCNT1. Lys-50 is deacetylated by SIRT1. Polyubiquitination by host MDM2 does not target Tat to degradation, but activates its transactivation function and fosters interaction with CCNT1 and TAR RNA. In terms of processing, phosphorylated by EIF2AK2 on serine and threonine residues adjacent to the basic region important for TAR RNA binding and function. Phosphorylation of Tat by EIF2AK2 is dependent on the prior activation of EIF2AK2 by dsRNA.

It is found in the host nucleus. The protein localises to the host nucleolus. It localises to the host cytoplasm. Its subcellular location is the secreted. Its function is as follows. Transcriptional activator that increases RNA Pol II processivity, thereby increasing the level of full-length viral transcripts. Recognizes a hairpin structure at the 5'-LTR of the nascent viral mRNAs referred to as the transactivation responsive RNA element (TAR) and recruits the cyclin T1-CDK9 complex (P-TEFb complex) that will in turn hyperphosphorylate the RNA polymerase II to allow efficient elongation. The CDK9 component of P-TEFb and other Tat-activated kinases hyperphosphorylate the C-terminus of RNA Pol II that becomes stabilized and much more processive. Other factors such as HTATSF1/Tat-SF1, SUPT5H/SPT5, and HTATIP2 are also important for Tat's function. Besides its effect on RNA Pol II processivity, Tat induces chromatin remodeling of proviral genes by recruiting the histone acetyltransferases (HATs) CREBBP, EP300 and PCAF to the chromatin. This also contributes to the increase in proviral transcription rate, especially when the provirus integrates in transcriptionally silent region of the host genome. To ensure maximal activation of the LTR, Tat mediates nuclear translocation of NF-kappa-B by interacting with host RELA. Through its interaction with host TBP, Tat may also modulate transcription initiation. Tat can reactivate a latently infected cell by penetrating in it and transactivating its LTR promoter. In the cytoplasm, Tat is thought to act as a translational activator of HIV-1 mRNAs. Extracellular circulating Tat can be endocytosed by surrounding uninfected cells via the binding to several surface receptors such as CD26, CXCR4, heparan sulfate proteoglycans (HSPG) or LDLR. Neurons are rarely infected, but they internalize Tat via their LDLR. Through its interaction with nuclear HATs, Tat is potentially able to control the acetylation-dependent cellular gene expression. Modulates the expression of many cellular genes involved in cell survival, proliferation or in coding for cytokines or cytokine receptors. Tat plays a role in T-cell and neurons apoptosis. Tat induced neurotoxicity and apoptosis probably contribute to neuroAIDS. Circulating Tat also acts as a chemokine-like and/or growth factor-like molecule that binds to specific receptors on the surface of the cells, affecting many cellular pathways. In the vascular system, Tat binds to ITGAV/ITGB3 and ITGA5/ITGB1 integrins dimers at the surface of endothelial cells and competes with bFGF for heparin-binding sites, leading to an excess of soluble bFGF. The polypeptide is Protein Tat (Homo sapiens (Human)).